The sequence spans 177 residues: ATP synthase subunit delta (177 aa).

It belongs to the ATPase delta chain family. F-type ATPases have 2 components, F(1) - the catalytic core - and F(0) - the membrane proton channel. F(1) has five subunits: alpha(3), beta(3), gamma(1), delta(1), epsilon(1). F(0) has three main subunits: a(1), b(2) and c(10-14). The alpha and beta chains form an alternating ring which encloses part of the gamma chain. F(1) is attached to F(0) by a central stalk formed by the gamma and epsilon chains, while a peripheral stalk is formed by the delta and b chains.

The protein resides in the cell inner membrane. Functionally, f(1)F(0) ATP synthase produces ATP from ADP in the presence of a proton or sodium gradient. F-type ATPases consist of two structural domains, F(1) containing the extramembraneous catalytic core and F(0) containing the membrane proton channel, linked together by a central stalk and a peripheral stalk. During catalysis, ATP synthesis in the catalytic domain of F(1) is coupled via a rotary mechanism of the central stalk subunits to proton translocation. Its function is as follows. This protein is part of the stalk that links CF(0) to CF(1). It either transmits conformational changes from CF(0) to CF(1) or is implicated in proton conduction. This is ATP synthase subunit delta from Shewanella pealeana (strain ATCC 700345 / ANG-SQ1).